A 476-amino-acid polypeptide reads, in one-letter code: 3-isopropylmalate dehydratase large subunit (476 aa).

The [4Fe-4S] cluster site is built by Cys-353, Cys-413, and Cys-416.

Belongs to the aconitase/IPM isomerase family. LeuC type 1 subfamily. As to quaternary structure, heterodimer of LeuC and LeuD. The cofactor is [4Fe-4S] cluster.

It catalyses the reaction (2R,3S)-3-isopropylmalate = (2S)-2-isopropylmalate. It functions in the pathway amino-acid biosynthesis; L-leucine biosynthesis; L-leucine from 3-methyl-2-oxobutanoate: step 2/4. In terms of biological role, catalyzes the isomerization between 2-isopropylmalate and 3-isopropylmalate, via the formation of 2-isopropylmaleate. In Yersinia pseudotuberculosis serotype IB (strain PB1/+), this protein is 3-isopropylmalate dehydratase large subunit.